The primary structure comprises 345 residues: Anthranilate phosphoribosyltransferase (345 aa).

5-phospho-alpha-D-ribose 1-diphosphate contacts are provided by residues glycine 80, 83 to 84, threonine 88, 90 to 93, 108 to 116, and serine 120; these read GD, NIST, and KHGNRSVSS. Position 80 (glycine 80) interacts with anthranilate. Serine 92 provides a ligand contact to Mg(2+). Asparagine 111 contributes to the anthranilate binding site. Arginine 166 contacts anthranilate. The Mg(2+) site is built by aspartate 225 and glutamate 226.

It belongs to the anthranilate phosphoribosyltransferase family. In terms of assembly, homodimer. Mg(2+) serves as cofactor.

It carries out the reaction N-(5-phospho-beta-D-ribosyl)anthranilate + diphosphate = 5-phospho-alpha-D-ribose 1-diphosphate + anthranilate. It functions in the pathway amino-acid biosynthesis; L-tryptophan biosynthesis; L-tryptophan from chorismate: step 2/5. Its function is as follows. Catalyzes the transfer of the phosphoribosyl group of 5-phosphorylribose-1-pyrophosphate (PRPP) to anthranilate to yield N-(5'-phosphoribosyl)-anthranilate (PRA). The chain is Anthranilate phosphoribosyltransferase from Acetivibrio thermocellus (strain ATCC 27405 / DSM 1237 / JCM 9322 / NBRC 103400 / NCIMB 10682 / NRRL B-4536 / VPI 7372) (Clostridium thermocellum).